The sequence spans 247 residues: Zinc finger protein YPR015C (247 aa).

C2H2-type zinc fingers lie at residues 185–207 and 213–237; these read KQCP…YLIH and FKCT…LRTH.

This Saccharomyces cerevisiae (strain ATCC 204508 / S288c) (Baker's yeast) protein is Zinc finger protein YPR015C.